The chain runs to 402 residues: Type II NADH:quinone oxidoreductase (402 aa).

FAD is bound by residues 12–16 (GAGYA), 39–40 (NK), and Val-83. Glu-172 is an active-site residue. FAD is bound by residues Asp-302, 319 to 320 (AQ), and Lys-379.

Belongs to the NADH dehydrogenase family. It depends on FAD as a cofactor.

The protein resides in the cell membrane. It catalyses the reaction a quinone + NADH + H(+) = a quinol + NAD(+). Alternative, nonproton pumping NADH:quinone oxidoreductase that delivers electrons to the respiratory chain by oxidation of NADH and reduction of quinones, and contributes to the regeneration of NAD(+). This chain is Type II NADH:quinone oxidoreductase, found in Staphylococcus epidermidis (strain ATCC 12228 / FDA PCI 1200).